Consider the following 382-residue polypeptide: Chaperone protein DnaJ (382 aa).

One can recognise a J domain in the interval 4–69 (DYYEVLGVSR…DKRRRYDQFG (66 aa)). The CR-type zinc-finger motif lies at 138-219 (GVEKTIKIKK…CYGEGIKQGE (82 aa)). The Zn(2+) site is built by C151, C154, C167, C170, C193, C196, C207, and C210. 4 CXXCXGXG motif repeats span residues 151 to 158 (CKECNGSG), 167 to 174 (CPTCHGAG), 193 to 200 (CPTCGGEG), and 207 to 214 (CPSCYGEG).

It belongs to the DnaJ family. As to quaternary structure, homodimer. Zn(2+) is required as a cofactor.

The protein resides in the cytoplasm. Participates actively in the response to hyperosmotic and heat shock by preventing the aggregation of stress-denatured proteins and by disaggregating proteins, also in an autonomous, DnaK-independent fashion. Unfolded proteins bind initially to DnaJ; upon interaction with the DnaJ-bound protein, DnaK hydrolyzes its bound ATP, resulting in the formation of a stable complex. GrpE releases ADP from DnaK; ATP binding to DnaK triggers the release of the substrate protein, thus completing the reaction cycle. Several rounds of ATP-dependent interactions between DnaJ, DnaK and GrpE are required for fully efficient folding. Also involved, together with DnaK and GrpE, in the DNA replication of plasmids through activation of initiation proteins. The protein is Chaperone protein DnaJ of Chlorobium luteolum (strain DSM 273 / BCRC 81028 / 2530) (Pelodictyon luteolum).